The primary structure comprises 448 residues: T-box transcription factor T homolog 1 (448 aa).

The segment at residues 54-224 (LWDKFNALTN…YNPFAKAFLD (171 aa)) is a DNA-binding region (T-box). 2 disordered regions span residues 290-312 (APYP…TAAS) and 401-448 (TTAS…PPSL). The span at 417 to 442 (STDSGYGHSTTPPAPQTRITSNNWSP) shows a compositional bias: polar residues.

The protein localises to the nucleus. In terms of biological role, involved in the transcriptional regulation of genes required for mesoderm formation and differentiation. The chain is T-box transcription factor T homolog 1 from Branchiostoma floridae (Florida lancelet).